Reading from the N-terminus, the 215-residue chain is Cytochrome b6 (215 aa).

The helical transmembrane segment at 32 to 52 (IFYCLGGITFTLFLVQVATGF) threads the bilayer. Cysteine 35 is a binding site for heme c. Heme b is bound by residues histidine 86 and histidine 100. Helical transmembrane passes span 90–110 (ASMMVLSMILHVCRVYLTGGF), 116–136 (LTWITGVIMAVCTVSFGVTGY), and 186–206 (LHTFVLPLLTVVFMLAHFLMI). Residues histidine 187 and histidine 202 each contribute to the heme b site.

This sequence belongs to the cytochrome b family. PetB subfamily. As to quaternary structure, the 4 large subunits of the cytochrome b6-f complex are cytochrome b6, subunit IV (17 kDa polypeptide, PetD), cytochrome f and the Rieske protein, while the 4 small subunits are PetG, PetL, PetM and PetN. The complex functions as a dimer. Heme b serves as cofactor. Heme c is required as a cofactor.

It localises to the plastid. It is found in the chloroplast thylakoid membrane. Component of the cytochrome b6-f complex, which mediates electron transfer between photosystem II (PSII) and photosystem I (PSI), cyclic electron flow around PSI, and state transitions. This is Cytochrome b6 from Tupiella akineta (Green alga).